A 417-amino-acid chain; its full sequence is Tryptophan synthase beta chain (417 aa).

Position 99 is an N6-(pyridoxal phosphate)lysine (Lys99).

The protein belongs to the TrpB family. In terms of assembly, tetramer of two alpha and two beta chains. Pyridoxal 5'-phosphate serves as cofactor.

It catalyses the reaction (1S,2R)-1-C-(indol-3-yl)glycerol 3-phosphate + L-serine = D-glyceraldehyde 3-phosphate + L-tryptophan + H2O. The protein operates within amino-acid biosynthesis; L-tryptophan biosynthesis; L-tryptophan from chorismate: step 5/5. In terms of biological role, the beta subunit is responsible for the synthesis of L-tryptophan from indole and L-serine. In Corynebacterium glutamicum (strain R), this protein is Tryptophan synthase beta chain.